The sequence spans 431 residues: Serine/threonine-protein kinase SSN3 (431 aa).

The region spanning 27-355 (YQIIGYIAAG…ADNALVHPYF (329 aa)) is the Protein kinase domain. ATP contacts are provided by residues 33 to 41 (IAAGTYGKV) and K59. D174 acts as the Proton acceptor in catalysis. The segment at 397–431 (RHGGAYDDQHNNSNNNTNNSLNANNANNVPRKRAR) is disordered. The span at 407 to 424 (NNSNNNTNNSLNANNANN) shows a compositional bias: low complexity.

The protein belongs to the protein kinase superfamily. CMGC Ser/Thr protein kinase family. CDC2/CDKX subfamily. Component of the srb8-11 complex, a regulatory module of the Mediator complex. Mg(2+) is required as a cofactor.

It localises to the nucleus. The enzyme catalyses L-seryl-[protein] + ATP = O-phospho-L-seryl-[protein] + ADP + H(+). It catalyses the reaction L-threonyl-[protein] + ATP = O-phospho-L-threonyl-[protein] + ADP + H(+). The catalysed reaction is [DNA-directed RNA polymerase] + ATP = phospho-[DNA-directed RNA polymerase] + ADP + H(+). Its function is as follows. Component of the srb8-11 complex. The srb8-11 complex is a regulatory module of the Mediator complex which is itself dependent transcription. The srb8-11 complex may be involved in the transcriptional repression of a subset of genes regulated by Mediator. It may inhibit the association of the Mediator complex with RNA polymerase II to form the holoenzyme complex. The srb8-11 complex phosphorylates the C-terminal domain (CTD) of the largest subunit of RNA polymerase II. The protein is Serine/threonine-protein kinase SSN3 (SSN3) of Scheffersomyces stipitis (strain ATCC 58785 / CBS 6054 / NBRC 10063 / NRRL Y-11545) (Yeast).